Consider the following 349-residue polypeptide: Methylglutaconyl-CoA hydratase 1, mitochondrial (349 aa).

A mitochondrion-targeting transit peptide spans 1-37 (MPPVSRILSYAPRVAIRPSSQLARPARAFAVGTVRYY).

Belongs to the enoyl-CoA hydratase/isomerase family. Homohexamer.

The protein localises to the mitochondrion. It catalyses the reaction (3S)-3-hydroxy-3-methylglutaryl-CoA = 3-methyl-(2E)-glutaconyl-CoA + H2O. It functions in the pathway amino-acid degradation; L-leucine degradation; (S)-3-hydroxy-3-methylglutaryl-CoA from 3-isovaleryl-CoA: step 3/3. Functionally, 3-methylglutaconyl-CoA hydratase that catalyzes the fifth step in the leucine degradation pathway, the reversible hydration of 3-methylglutaconyl-CoA (3-MG-CoA) to 3-hydroxy-3-methylglutaryl-CoA (HMG-CoA). Involved in vegetative growth, conidiation and in the stress response. Controls mitochondrial morphology and mitophagy, which are critical for the infectious growth of the pathogen. In Pyricularia oryzae (strain 70-15 / ATCC MYA-4617 / FGSC 8958) (Rice blast fungus), this protein is Methylglutaconyl-CoA hydratase 1, mitochondrial.